The sequence spans 835 residues: MKVTEMQKNWLICCLLIGLIKIIGSELWVTVYYGVPVWRDAETVLFCASDAKAHSTEAHNIWATQACVPTDPNPQEVLIPNVTERFDMWKNNMVDQMQEDIISLWEQSLKPCVKLTPLCVTLSCSSWRSVNNSVNQTNHVQMQNCSFNVTTELRDKKKQVYSLFYMGDIIPLDTNNSSGNNSQYRLINCNTTAVTQACPKISFEPIPIYYCAPPGFAIIKCNDQDFNGTGECNNVSTVQCTHGIKPVISTQLILNGSLATSNIVIRNNSKDTLLVQLNESIPINCTRPGNKTRGQVQIGPGMTFYNIENIIGDTRQAYCEVNRTWEQIWNTTKQIIINNRKNITFIPNPGGDLEVTNLMINCGGEFFYCNTSQLFTNQNGNTTGNITLQCRIRQIVNLWTRVGKGIYAPPIKGPINCLSNITGIILDYTKSGTEKYTIYPTGGDMTNLWRQELYKYKVVSIEPIGVAPGKAKRHTVTRQKRAAFGLGALFLGFLGAAGSTMGAASITLTVQARKLLSGIVQQQNNLLRAIEAQQHLLQLSVWGIKQLQARVLAIERYLRDQQILGLWGCSGKSVCYTNVPWNTTWSNNNSYDTIWGNMTWQNWDEQVRNYSGVIFGLLEQAQEQQSINEKSLLELDQWSSLWNWFDITKWLWYIKIFIMVVAGIVGIRIISIIMSMVARVRQGYSPLSLQTLIPTTRGPDRPERTEEDAGELDNGRSVRLVSGFLALAWEDFRNLLLFLYHRLTDCLSILRRTLELLRQNIHKGLQLLNELRIYLWGIIAYWGRELKISAINLLDTTAVAVAEGTDRIIELVQRIGRGILHIPRRIRQGLERALL.

A signal peptide spans 1–25; that stretch reads MKVTEMQKNWLICCLLIGLIKIIGS. The Extracellular portion of the chain corresponds to 26-656; the sequence is ELWVTVYYGV…ITKWLWYIKI (631 aa). The cysteines at positions 47 and 67 are disulfide-linked. Residues Asn81, Asn131, Asn135, Asn144, Asn148, Asn175, Asn176, Asn180, Asn190, Asn227, Asn234, Asn255, Asn267, Asn278, Asn284, Asn290, Asn322, Asn330, and Asn342 are each glycosylated (N-linked (GlcNAc...) asparagine; by host). Intrachain disulfides connect Cys112–Cys198, Cys119–Cys189, Cys124–Cys145, Cys211–Cys240, and Cys221–Cys232. The segment at 124-144 is V1; sequence CSSWRSVNNSVNQTNHVQMQN. Residues 145–189 form a V2 region; that stretch reads CSFNVTTELRDKKKQVYSLFYMGDIIPLDTNNSSGNNSQYRLINC. The V3 stretch occupies residues 285–318; it reads CTRPGNKTRGQVQIGPGMTFYNIENIIGDTRQAY. Cys285 and Cys319 form a disulfide bridge. A CD4-binding loop region spans residues 348-358; that stretch reads NPGGDLEVTNL. 2 disulfide bridges follow: Cys362/Cys417 and Cys369/Cys390. Residues 369–390 are V4; sequence CNTSQLFTNQNGNTTGNITLQC. N-linked (GlcNAc...) asparagine; by host glycans are attached at residues Asn370, Asn381, Asn385, and Asn420. Residues 433-441 are V5; that stretch reads TEKYTIYPT. Residues 482 to 503 are fusion peptide; that stretch reads AAFGLGALFLGFLGAAGSTMGA. The segment at 545–563 is immunosuppression; the sequence is KQLQARVLAIERYLRDQQI. Cys569 and Cys575 are joined by a disulfide. N-linked (GlcNAc...) asparagine; by host glycosylation is found at Asn582, Asn588, Asn597, and Asn609. Residues 605-639 are a coiled coil; it reads EQVRNYSGVIFGLLEQAQEQQSINEKSLLELDQWS. Positions 634–655 are MPER; binding to GalCer; the sequence is ELDQWSSLWNWFDITKWLWYIK. A helical transmembrane segment spans residues 657–677; sequence FIMVVAGIVGIRIISIIMSMV. The Cytoplasmic portion of the chain corresponds to 678-835; that stretch reads ARVRQGYSPL…IRQGLERALL (158 aa). A YXXL motif; contains endocytosis signal motif is present at residues 684 to 687; sequence YSPL. A Di-leucine internalization motif motif is present at residues 834–835; sequence LL.

The protein belongs to the HIV-1 env protein family. The mature envelope protein (Env) consists of a homotrimer of non-covalently associated gp120-gp41 heterodimers. The resulting complex protrudes from the virus surface as a spike. There seems to be as few as 10 spikes on the average virion. Interacts with host CD4, CCR5 and CXCR4. Gp120 also interacts with the C-type lectins CD209/DC-SIGN and CLEC4M/DC-SIGNR (collectively referred to as DC-SIGN(R)). Gp120 and gp41 interact with GalCer. Gp120 interacts with host ITGA4/ITGB7 complex; on CD4+ T-cells, this interaction results in rapid activation of integrin ITGAL/LFA-1, which facilitates efficient cell-to-cell spreading of HIV-1. Gp120 interacts with cell-associated heparan sulfate; this interaction increases virus infectivity on permissive cells and may be involved in infection of CD4- cells. In terms of assembly, the mature envelope protein (Env) consists of a homotrimer of non-covalently associated gp120-gp41 heterodimers. The resulting complex protrudes from the virus surface as a spike. There seems to be as few as 10 spikes on the average virion. In terms of processing, highly glycosylated by host. The high number of glycan on the protein is reffered to as 'glycan shield' because it contributes to hide protein sequence from adaptive immune system. Palmitoylation of the transmembrane protein and of Env polyprotein (prior to its proteolytic cleavage) is essential for their association with host cell membrane lipid rafts. Palmitoylation is therefore required for envelope trafficking to classical lipid rafts, but not for viral replication. Post-translationally, specific enzymatic cleavages in vivo yield mature proteins. Envelope glycoproteins are synthesized as an inactive precursor that is heavily N-glycosylated and processed likely by host cell furin in the Golgi to yield the mature SU and TM proteins. The cleavage site between SU and TM requires the minimal sequence [KR]-X-[KR]-R. About 2 of the 9 disulfide bonds of gp41 are reduced by P4HB/PDI, following binding to CD4 receptor.

Its subcellular location is the virion membrane. It is found in the host cell membrane. The protein resides in the host endosome membrane. In terms of biological role, attaches the virus to the host lymphoid cell by binding to the primary receptor CD4. This interaction induces a structural rearrangement creating a high affinity binding site for a chemokine coreceptor like CXCR4 and/or CCR5. Acts as a ligand for CD209/DC-SIGN and CLEC4M/DC-SIGNR, which are respectively found on dendritic cells (DCs), and on endothelial cells of liver sinusoids and lymph node sinuses. These interactions allow capture of viral particles at mucosal surfaces by these cells and subsequent transmission to permissive cells. HIV subverts the migration properties of dendritic cells to gain access to CD4+ T-cells in lymph nodes. Virus transmission to permissive T-cells occurs either in trans (without DCs infection, through viral capture and transmission), or in cis (following DCs productive infection, through the usual CD4-gp120 interaction), thereby inducing a robust infection. In trans infection, bound virions remain infectious over days and it is proposed that they are not degraded, but protected in non-lysosomal acidic organelles within the DCs close to the cell membrane thus contributing to the viral infectious potential during DCs' migration from the periphery to the lymphoid tissues. On arrival at lymphoid tissues, intact virions recycle back to DCs' cell surface allowing virus transmission to CD4+ T-cells. Its function is as follows. Acts as a class I viral fusion protein. Under the current model, the protein has at least 3 conformational states: pre-fusion native state, pre-hairpin intermediate state, and post-fusion hairpin state. During fusion of viral and target intracellular membranes, the coiled coil regions (heptad repeats) assume a trimer-of-hairpins structure, positioning the fusion peptide in close proximity to the C-terminal region of the ectodomain. The formation of this structure appears to drive apposition and subsequent fusion of viral and target cell membranes. Complete fusion occurs in host cell endosomes and is dynamin-dependent, however some lipid transfer might occur at the plasma membrane. The virus undergoes clathrin-dependent internalization long before endosomal fusion, thus minimizing the surface exposure of conserved viral epitopes during fusion and reducing the efficacy of inhibitors targeting these epitopes. Membranes fusion leads to delivery of the nucleocapsid into the cytoplasm. Functionally, oligomerizes in the host endoplasmic reticulum into predominantly trimers. In a second time, gp160 transits in the host Golgi, where glycosylation is completed. The precursor is then proteolytically cleaved in the trans-Golgi and thereby activated by cellular furin or furin-like proteases to produce gp120 and gp41. The chain is Envelope glycoprotein gp160 from Pan troglodytes (Chimpanzee).